A 434-amino-acid polypeptide reads, in one-letter code: Nicotinate phosphoribosyltransferase (434 aa).

Phosphohistidine; by autocatalysis is present on His242.

The protein belongs to the NAPRTase family. In terms of processing, transiently phosphorylated on a His residue during the reaction cycle. Phosphorylation strongly increases the affinity for substrates and increases the rate of nicotinate D-ribonucleotide production. Dephosphorylation regenerates the low-affinity form of the enzyme, leading to product release.

The enzyme catalyses nicotinate + 5-phospho-alpha-D-ribose 1-diphosphate + ATP + H2O = nicotinate beta-D-ribonucleotide + ADP + phosphate + diphosphate. The protein operates within cofactor biosynthesis; NAD(+) biosynthesis; nicotinate D-ribonucleotide from nicotinate: step 1/1. Its function is as follows. Catalyzes the synthesis of beta-nicotinate D-ribonucleotide from nicotinate and 5-phospho-D-ribose 1-phosphate at the expense of ATP. The sequence is that of Nicotinate phosphoribosyltransferase from Brucella anthropi (strain ATCC 49188 / DSM 6882 / CCUG 24695 / JCM 21032 / LMG 3331 / NBRC 15819 / NCTC 12168 / Alc 37) (Ochrobactrum anthropi).